The sequence spans 129 residues: NADH-quinone oxidoreductase subunit A (129 aa).

A run of 3 helical transmembrane segments spans residues 14–34, 67–87, and 95–115; these read LAIH…VAAL, FLIA…FAWA, and WFGL…LVYL.

This sequence belongs to the complex I subunit 3 family. NDH-1 is composed of 14 different subunits. Subunits NuoA, H, J, K, L, M, N constitute the membrane sector of the complex.

It is found in the cell inner membrane. It catalyses the reaction a quinone + NADH + 5 H(+)(in) = a quinol + NAD(+) + 4 H(+)(out). NDH-1 shuttles electrons from NADH, via FMN and iron-sulfur (Fe-S) centers, to quinones in the respiratory chain. The immediate electron acceptor for the enzyme in this species is believed to be ubiquinone. Couples the redox reaction to proton translocation (for every two electrons transferred, four hydrogen ions are translocated across the cytoplasmic membrane), and thus conserves the redox energy in a proton gradient. The protein is NADH-quinone oxidoreductase subunit A of Rhodopseudomonas palustris (strain HaA2).